Reading from the N-terminus, the 429-residue chain is Protein ORF66 (429 aa).

The protein belongs to the herpesviridae UL49 family. As to quaternary structure, interacts with ORF34.

The protein resides in the host nucleus. It localises to the host cytoplasm. In terms of biological role, participates in the expression of late viral mRNAs. This is Protein ORF66 (ORF66) from Homo sapiens (Human).